The following is a 470-amino-acid chain: Glutamyl-tRNA reductase (470 aa).

Substrate is bound by residues 49–52, S109, 114–116, and Q120; these read TCNR and ESQ. The Nucleophile role is filled by C50. 223–228 serves as a coordination point for NADP(+); that stretch reads GAGAVG.

Belongs to the glutamyl-tRNA reductase family. In terms of assembly, homodimer.

The catalysed reaction is (S)-4-amino-5-oxopentanoate + tRNA(Glu) + NADP(+) = L-glutamyl-tRNA(Glu) + NADPH + H(+). The protein operates within porphyrin-containing compound metabolism; protoporphyrin-IX biosynthesis; 5-aminolevulinate from L-glutamyl-tRNA(Glu): step 1/2. Catalyzes the NADPH-dependent reduction of glutamyl-tRNA(Glu) to glutamate 1-semialdehyde (GSA). This is Glutamyl-tRNA reductase from Frankia alni (strain DSM 45986 / CECT 9034 / ACN14a).